The primary structure comprises 319 residues: Ribonuclease Z (319 aa).

Histidine 62, histidine 64, aspartate 66, histidine 67, histidine 145, aspartate 216, and histidine 274 together coordinate Zn(2+). The Proton acceptor role is filled by aspartate 66.

It belongs to the RNase Z family. As to quaternary structure, homodimer. The cofactor is Zn(2+).

The catalysed reaction is Endonucleolytic cleavage of RNA, removing extra 3' nucleotides from tRNA precursor, generating 3' termini of tRNAs. A 3'-hydroxy group is left at the tRNA terminus and a 5'-phosphoryl group is left at the trailer molecule.. Functionally, zinc phosphodiesterase, which displays some tRNA 3'-processing endonuclease activity. Probably involved in tRNA maturation, by removing a 3'-trailer from precursor tRNA. This Parasynechococcus marenigrum (strain WH8102) protein is Ribonuclease Z.